The chain runs to 299 residues: Homeobox protein Nkx-2.5 (299 aa).

The span at 90 to 119 shows a compositional bias: basic and acidic residues; it reads KDPKDHKKDICPLQKTLEHDKREAEDPERP. Residues 90–128 are disordered; that stretch reads KDPKDHKKDICPLQKTLEHDKREAEDPERPRQRKRRKPR. The segment at residues 124-183 is a DNA-binding region (homeobox); it reads RRKPRVLFSQAQVYELERRFKQQKYLSAPERDHLANVLKLTSTQVKIWFQNRRYKCKRQR.

Belongs to the NK-2 homeobox family. Homodimer (via the homeobox); binds DNA as homodimer. As to expression, heart and gut tissue.

It is found in the nucleus. Functionally, transcription factor required for the development of the heart and the spleen. Implicated in commitment to and/or differentiation of the myocardial lineage. May regulate the expression of genes involved in cardiogenesis and play a role in the formation of gut and the pharyngeal region. Binds to the core DNA motif of promoter. The protein is Homeobox protein Nkx-2.5 (nkx-2.5) of Xenopus laevis (African clawed frog).